Consider the following 422-residue polypeptide: Transcription initiation factor TFIID subunit 15b (422 aa).

4 disordered regions span residues 1-24, 47-94, 111-263, and 368-422; these read MAGMYNQDGGGGAPIPSYGGDGYG, YGGR…PNPS, ALAP…DAAT, and MAEK…SRPY. Composition is skewed to gly residues over residues 8 to 24 and 47 to 83; these read DGGGGAPIPSYGGDGYG and YGGRGGYGGGGGRGNRGGGGGGYQGGDRGGRGSGGGG. A RanBP2-type zinc finger spans residues 84–115; sequence RDGDWRCPNPSCGNVNFARRVECNKCGALAPS. Positions 123–133 are enriched in gly residues; that stretch reads DRGGGGYSRGG. Residues 134-156 are compositionally biased toward basic and acidic residues; the sequence is GDSDRGGGRGGRNDSGRSYESSR. Composition is skewed to gly residues over residues 219 to 229 and 236 to 247; these read PSYGGPRGGYG and GGRGGRSGGYDG. Residues 252–263 show a composition bias toward basic and acidic residues; sequence RRQEASYEDAAT. Positions 280-371 constitute an RRM domain; it reads ARIYISNLPP…NKISVTMAEK (92 aa). Residues 382–397 are compositionally biased toward gly residues; the sequence is RGGGRGGGGGGYGGGG.

The protein belongs to the TAF15 family. In terms of assembly, component of the TFIID complex. TFIID is composed of TATA binding protein (TBP) and a number of TBP-associated factors (TAFs) whose MWs range from 14-217 kDa. Interacts with TAF4, TAF4B, TAF5, TAF12B and TAF14. As to expression, expressed in roots, leaves and inflorescences.

It localises to the nucleus. Functionally, TAFs are components of the transcription factor IID (TFIID) complex that is essential for mediating regulation of RNA polymerase transcription. The chain is Transcription initiation factor TFIID subunit 15b (TAF15B) from Arabidopsis thaliana (Mouse-ear cress).